Here is a 251-residue protein sequence, read N- to C-terminus: MyoD family inhibitor (251 aa).

Disordered regions lie at residues 1–64 (MSQV…PHDS), 84–167 (VTCQ…APAV), and 230–251 (RPKQNCHDPSLLPGTHGVGKEF). The segment covering 84–94 (VTCQPQGNPQG) has biased composition (polar residues). The span at 138–154 (GSQAGRKSRGSARSASQ) shows a compositional bias: low complexity.

It belongs to the MDFI family. In terms of assembly, interacts (via C-terminus) with AXIN1 and LEF1. Interacts with CCNT2. Interacts (via C-terminus) with Piezo channel composed of PIEZO1 or PIEZO2; the interaction prolongs Piezo channel inactivation. In the embryo, highly expressed in the sclerotome. Also expressed in the notochord, neural tube, limb buds, heart, branchial arches and head mesenchyme. In the adult, highly expressed in skeletal muscle. Expressed at lower levels in most other tissues.

Its subcellular location is the nucleus. It is found in the cytoplasm. Its function is as follows. Inhibits the transactivation activity of the Myod family of myogenic factors and represses myogenesis. Acts by associating with Myod family members and retaining them in the cytoplasm by masking their nuclear localization signals. Can also interfere with the DNA-binding activity of Myod family members. Plays an important role in trophoblast and chondrogenic differentiation. Regulates the transcriptional activity of TCF7L1/TCF3 by interacting directly with Tcf7l1/Tcf3 and preventing it from binding DNA. Binds to the axin complex, resulting in an increase in the level of free beta-catenin. Affects axin regulation of the WNT and JNK signaling pathways. Regulates the activity of mechanosensitive Piezo channel. The polypeptide is MyoD family inhibitor (Mdfi) (Mus musculus (Mouse)).